A 967-amino-acid chain; its full sequence is Nonsense-mediated mRNA decay factor SMG8 (967 aa).

Residues 627–702 (LNEGEDADAD…SCPESQSVAS (76 aa)) form a disordered region. Acidic residues predominate over residues 628–639 (NEGEDADADADS). Residues 643 to 666 (RSQICSSGQSSRSRSNSSSSDTSS) are compositionally biased toward low complexity. A compositionally biased stretch (polar residues) spans 686-702 (ATEALSESCPESQSVAS).

Belongs to the SMG8 family.

In terms of biological role, involved in nonsense-mediated decay (NMD) of mRNAs containing premature stop codons. Probable component of kinase complex containing nonC and recruited to stalled ribosomes. The chain is Nonsense-mediated mRNA decay factor SMG8 from Drosophila mojavensis (Fruit fly).